The sequence spans 82 residues: Small ribosomal subunit protein bS16 (82 aa).

This sequence belongs to the bacterial ribosomal protein bS16 family.

The protein is Small ribosomal subunit protein bS16 of Gloeothece citriformis (strain PCC 7424) (Cyanothece sp. (strain PCC 7424)).